The chain runs to 341 residues: tRNA N6-adenosine threonylcarbamoyltransferase (341 aa).

Fe cation is bound by residues His111 and His115. Substrate is bound by residues 134 to 138, Asp167, Gly180, and Asn276; that span reads LVSGG. Residue Asp304 coordinates Fe cation.

It belongs to the KAE1 / TsaD family. The cofactor is Fe(2+).

It is found in the cytoplasm. The catalysed reaction is L-threonylcarbamoyladenylate + adenosine(37) in tRNA = N(6)-L-threonylcarbamoyladenosine(37) in tRNA + AMP + H(+). Functionally, required for the formation of a threonylcarbamoyl group on adenosine at position 37 (t(6)A37) in tRNAs that read codons beginning with adenine. Is involved in the transfer of the threonylcarbamoyl moiety of threonylcarbamoyl-AMP (TC-AMP) to the N6 group of A37, together with TsaE and TsaB. TsaD likely plays a direct catalytic role in this reaction. The sequence is that of tRNA N6-adenosine threonylcarbamoyltransferase from Pseudomonas fluorescens (strain ATCC BAA-477 / NRRL B-23932 / Pf-5).